The chain runs to 138 residues: MLQPARRKFRKEQKGRNTGLATRGADVSFGDFGLKAVGRGRLTARQIEAARRAMTRHIKRGGRIWIRIFPDKPISRKPAEVRMGNGKGAPEYYVAEIQPGKVLYEMDGVNEQLAREAFRLAAAKLPIATTFVTRLIGS.

The segment covering 1–13 has biased composition (basic residues); the sequence is MLQPARRKFRKEQ. The segment at 1–22 is disordered; the sequence is MLQPARRKFRKEQKGRNTGLAT.

The protein belongs to the universal ribosomal protein uL16 family. Part of the 50S ribosomal subunit.

Its function is as follows. Binds 23S rRNA and is also seen to make contacts with the A and possibly P site tRNAs. The sequence is that of Large ribosomal subunit protein uL16 from Thiobacillus denitrificans (strain ATCC 25259 / T1).